Reading from the N-terminus, the 133-residue chain is Large ribosomal subunit protein uL22 (133 aa).

It belongs to the universal ribosomal protein uL22 family. As to quaternary structure, part of the 50S ribosomal subunit.

Its function is as follows. This protein binds specifically to 23S rRNA; its binding is stimulated by other ribosomal proteins, e.g. L4, L17, and L20. It is important during the early stages of 50S assembly. It makes multiple contacts with different domains of the 23S rRNA in the assembled 50S subunit and ribosome. The globular domain of the protein is located near the polypeptide exit tunnel on the outside of the subunit, while an extended beta-hairpin is found that lines the wall of the exit tunnel in the center of the 70S ribosome. The sequence is that of Large ribosomal subunit protein uL22 from Nocardia farcinica (strain IFM 10152).